The chain runs to 323 residues: L-lactate dehydrogenase (323 aa).

NAD(+) contacts are provided by Val-11, Asp-32, and Tyr-63. Residues Gln-80 and Arg-86 each coordinate substrate. Residues Ser-99, 116 to 118 (VSN), and Ser-141 contribute to the NAD(+) site. 118-121 (NPVD) contributes to the substrate binding site. 146–149 (DTAR) serves as a coordination point for substrate. Arg-151 and His-166 together coordinate beta-D-fructose 1,6-bisphosphate. His-173 serves as the catalytic Proton acceptor. Phosphotyrosine is present on Tyr-221. Residue Thr-230 coordinates substrate.

This sequence belongs to the LDH/MDH superfamily. LDH family. In terms of assembly, homotetramer.

It is found in the cytoplasm. The enzyme catalyses (S)-lactate + NAD(+) = pyruvate + NADH + H(+). Its pathway is fermentation; pyruvate fermentation to lactate; (S)-lactate from pyruvate: step 1/1. Allosterically activated by fructose 1,6-bisphosphate (FBP). In terms of biological role, catalyzes the conversion of lactate to pyruvate. The protein is L-lactate dehydrogenase of Kosmotoga olearia (strain ATCC BAA-1733 / DSM 21960 / TBF 19.5.1).